The chain runs to 572 residues: Squalene monooxygenase (572 aa).

Topologically, residues 1–19 (MWTFLGIATFTYFYKKCGD) are cytoplasmic. The tract at residues 1 to 98 (MWTFLGIATF…EQLESKKCRK (98 aa)) is interaction with MARCHF6. Residues 20 to 40 (VTLANKELLLCVLVFLSLGLV) lie within the membrane without spanning it. At 41–572 (LSYRCRHRHG…IYSEMKYLVH (532 aa)) the chain is on the cytoplasmic side. Residues 61–72 (QFAAFSDILSAL) are required for degradation in response to high membrane cholesterol levels. Residues 116 to 572 (TSFVTDPEVI…IYSEMKYLVH (457 aa)) form a sufficient for enzyme activity region. FAD-binding positions include 131–132 (VL), 151–152 (ER), arginine 159, arginine 232, valine 248, aspartate 406, and methionine 419. The segment at 514–572 (PLVLIRHFFSVAIYATYFCFKSEPWATKPRALFSSGAVLYKACSILFPLIYSEMKYLVH) is hydrophobic; mediates interaction with membranes.

The protein belongs to the squalene monooxygenase family. In terms of assembly, interacts (via N-terminal domain) with MARCHF6. Interacts with SMIM22; this interaction modulates lipid droplet formation. It depends on FAD as a cofactor. Post-translationally, ubiquitinated by MARCHF6 in response to high cholesterol levels in intracellular membranes, leading to proteasomal degradation. In terms of tissue distribution, detected in liver.

The protein resides in the microsome membrane. It is found in the endoplasmic reticulum membrane. It catalyses the reaction squalene + reduced [NADPH--hemoprotein reductase] + O2 = (S)-2,3-epoxysqualene + oxidized [NADPH--hemoprotein reductase] + H2O + H(+). The protein operates within terpene metabolism; lanosterol biosynthesis; lanosterol from farnesyl diphosphate: step 2/3. Functionally, catalyzes the stereospecific oxidation of squalene to (S)-2,3-epoxysqualene, and is considered to be a rate-limiting enzyme in steroid biosynthesis. In Mus musculus (Mouse), this protein is Squalene monooxygenase (Sqle).